The sequence spans 225 residues: 2-C-methyl-D-erythritol 4-phosphate cytidylyltransferase (225 aa).

Belongs to the IspD/TarI cytidylyltransferase family. IspD subfamily.

It catalyses the reaction 2-C-methyl-D-erythritol 4-phosphate + CTP + H(+) = 4-CDP-2-C-methyl-D-erythritol + diphosphate. Its pathway is isoprenoid biosynthesis; isopentenyl diphosphate biosynthesis via DXP pathway; isopentenyl diphosphate from 1-deoxy-D-xylulose 5-phosphate: step 2/6. Its function is as follows. Catalyzes the formation of 4-diphosphocytidyl-2-C-methyl-D-erythritol from CTP and 2-C-methyl-D-erythritol 4-phosphate (MEP). The polypeptide is 2-C-methyl-D-erythritol 4-phosphate cytidylyltransferase (Cereibacter sphaeroides (strain ATCC 17029 / ATH 2.4.9) (Rhodobacter sphaeroides)).